The sequence spans 260 residues: Ras-related protein Rab-32B (260 aa).

Residues 11 to 50 (FDTDPDVSTDSNYNNNNNSNNNNSIISNSNNNNNNNNNNV) form a disordered region. Residues 21–49 (SNYNNNNNSNNNNSIISNSNNNNNNNNNN) show a composition bias toward low complexity. 66–73 (GDYAVGKS) serves as a coordination point for GTP. The Effector region motif lies at 88–96 (YKLTIGVDF). GTP-binding positions include 115-119 (DIAGH) and 177-180 (NKSD). A disordered region spans residues 231–260 (TNHPPKPEEDTLELTKTNGEKSDDSKSCCK). Positions 248 to 260 (NGEKSDDSKSCCK) are enriched in basic and acidic residues. S-geranylgeranyl cysteine attachment occurs at residues C258 and C259.

This sequence belongs to the small GTPase superfamily. Rab family.

In Dictyostelium discoideum (Social amoeba), this protein is Ras-related protein Rab-32B (rab32B).